We begin with the raw amino-acid sequence, 672 residues long: Threonine--tRNA ligase (672 aa).

The 59-residue stretch at 2-60 folds into the TGS domain; sequence SEPKNILLTVDGELREVTHGTTGLDLFREKPTTAVMRVDGLLWDLAREIPAGASVESVD. The catalytic stretch occupies residues 260–567; the sequence is DHRKLGAELD…LTEHYAGAFP (308 aa). Residues C366, H417, and H544 each coordinate Zn(2+).

Belongs to the class-II aminoacyl-tRNA synthetase family. In terms of assembly, homodimer. Zn(2+) serves as cofactor.

It is found in the cytoplasm. The enzyme catalyses tRNA(Thr) + L-threonine + ATP = L-threonyl-tRNA(Thr) + AMP + diphosphate + H(+). Functionally, catalyzes the attachment of threonine to tRNA(Thr) in a two-step reaction: L-threonine is first activated by ATP to form Thr-AMP and then transferred to the acceptor end of tRNA(Thr). Also edits incorrectly charged L-seryl-tRNA(Thr). The protein is Threonine--tRNA ligase of Micrococcus luteus (strain ATCC 4698 / DSM 20030 / JCM 1464 / CCM 169 / CCUG 5858 / IAM 1056 / NBRC 3333 / NCIMB 9278 / NCTC 2665 / VKM Ac-2230) (Micrococcus lysodeikticus).